Here is a 198-residue protein sequence, read N- to C-terminus: NAD(P)H dehydrogenase (quinone) (198 aa).

The Flavodoxin-like domain occupies valine 4–valine 189. Residues serine 10–isoleucine 15 and threonine 78–phenylalanine 80 contribute to the FMN site. NAD(+) is bound at residue tyrosine 12. Tryptophan 98 is a substrate binding site. Residues serine 113–glycine 118 and histidine 133 contribute to the FMN site.

This sequence belongs to the WrbA family. Requires FMN as cofactor.

The catalysed reaction is a quinone + NADH + H(+) = a quinol + NAD(+). The enzyme catalyses a quinone + NADPH + H(+) = a quinol + NADP(+). The sequence is that of NAD(P)H dehydrogenase (quinone) from Shigella dysenteriae serotype 1 (strain Sd197).